A 289-amino-acid polypeptide reads, in one-letter code: MTAKIGIIGGSGLYKMEALTDVEEVRLTTPFGDPSDAFICGKIGGVPVVFLARHGRHHHLLPTEIPFRANIYGFKSLGVEYLLSASAVGSLQEAVKPLDIVVPDQFIDRTRNRISTFFGDGIVAHIGFADPVCPALAGVLADAIADLNLPDVTLHRQGTYVCMEGPAFSTLAESNLYRSWGGTVIGMTNLPEAKLAREAEIAYATLALVTDYDCWHPEHDSVTVEMIMGNLQRNVKNAQAIICETVKRVHAHPPVSKAHRALKNAILTPLDQVPAATKEKLHLLLAKYL.

Phosphate contacts are provided by residues Ser11, 53–54 (RH), and 86–87 (SA). Met187 serves as a coordination point for substrate. Thr188 provides a ligand contact to phosphate. 211–213 (DYD) contacts substrate.

The protein belongs to the PNP/MTAP phosphorylase family. MTAP subfamily. In terms of assembly, homohexamer. Dimer of a homotrimer.

The catalysed reaction is S-methyl-5'-thioadenosine + phosphate = 5-(methylsulfanyl)-alpha-D-ribose 1-phosphate + adenine. Its pathway is amino-acid biosynthesis; L-methionine biosynthesis via salvage pathway; S-methyl-5-thio-alpha-D-ribose 1-phosphate from S-methyl-5'-thioadenosine (phosphorylase route): step 1/1. Functionally, catalyzes the reversible phosphorylation of S-methyl-5'-thioadenosine (MTA) to adenine and 5-methylthioribose-1-phosphate. Involved in the breakdown of MTA, a major by-product of polyamine biosynthesis. Responsible for the first step in the methionine salvage pathway after MTA has been generated from S-adenosylmethionine. Has broad substrate specificity with 6-aminopurine nucleosides as preferred substrates. The protein is S-methyl-5'-thioadenosine phosphorylase of Thermosynechococcus vestitus (strain NIES-2133 / IAM M-273 / BP-1).